Consider the following 481-residue polypeptide: p-aminobenzoyl-glutamate hydrolase subunit B (481 aa).

As to quaternary structure, forms a heterodimer with AbgA. Mn(2+) serves as cofactor.

In terms of biological role, component of the p-aminobenzoyl-glutamate hydrolase multicomponent enzyme system which catalyzes the cleavage of p-aminobenzoyl-glutamate (PABA-GLU) to form p-aminobenzoate (PABA) and glutamate. AbgAB does not degrade dipeptides and the physiological role of abgABT should be clarified. The sequence is that of p-aminobenzoyl-glutamate hydrolase subunit B (abgB) from Escherichia coli (strain K12).